The chain runs to 193 residues: Thymidine kinase (193 aa).

ATP is bound by residues 15–22 (GCMYSGKT) and 87–90 (DELH). Glutamate 88 serves as the catalytic Proton acceptor. Zn(2+) is bound by residues cysteine 147, cysteine 150, cysteine 185, and cysteine 188.

The protein belongs to the thymidine kinase family. In terms of assembly, homotetramer.

The protein localises to the cytoplasm. The catalysed reaction is thymidine + ATP = dTMP + ADP + H(+). This Chloroflexus aurantiacus (strain ATCC 29366 / DSM 635 / J-10-fl) protein is Thymidine kinase.